The following is a 331-amino-acid chain: Tagatose 1,6-diphosphate aldolase 2 (331 aa).

Belongs to the aldolase LacD family.

The enzyme catalyses D-tagatofuranose 1,6-bisphosphate = D-glyceraldehyde 3-phosphate + dihydroxyacetone phosphate. It participates in carbohydrate metabolism; D-tagatose 6-phosphate degradation; D-glyceraldehyde 3-phosphate and glycerone phosphate from D-tagatose 6-phosphate: step 2/2. The chain is Tagatose 1,6-diphosphate aldolase 2 (lacD2) from Enterococcus faecalis (strain ATCC 700802 / V583).